A 367-amino-acid polypeptide reads, in one-letter code: Alanine racemase (367 aa).

Catalysis depends on Lys35, which acts as the Proton acceptor; specific for D-alanine. Lys35 bears the N6-(pyridoxal phosphate)lysine mark. Arg130 is a substrate binding site. Tyr256 (proton acceptor; specific for L-alanine) is an active-site residue. Residue Met304 coordinates substrate.

This sequence belongs to the alanine racemase family. It depends on pyridoxal 5'-phosphate as a cofactor.

It catalyses the reaction L-alanine = D-alanine. Its pathway is amino-acid biosynthesis; D-alanine biosynthesis; D-alanine from L-alanine: step 1/1. In terms of biological role, catalyzes the interconversion of L-alanine and D-alanine. May also act on other amino acids. This chain is Alanine racemase (alr), found in Methylibium petroleiphilum (strain ATCC BAA-1232 / LMG 22953 / PM1).